The chain runs to 918 residues: Cap-specific mRNA (nucleoside-2'-O-)-methyltransferase 1 (918 aa).

Positions 1–18 (MADRKSDEGEDEYQHKEQ) are enriched in basic and acidic residues. Disordered stretches follow at residues 1–56 (MADR…EERA) and 62–81 (KRGY…EEEP). The segment covering 19 to 30 (MVTNRTSSFQPK) has biased composition (polar residues). Positions 43–56 (RAADRREEFMEERA) are enriched in basic and acidic residues. A compositionally biased stretch (acidic residues) spans 68 to 80 (GDDEEDDFTAEEE). The G-patch domain occupies 86–132 (PLTVAERLMAAMGHKAGEGLGKHGQGISEPIASSTQRGRTGLGHNAG). Positions 236 to 465 (FFQNRAAMKT…ERYITCKGLR (230 aa)) constitute a RrmJ-type SAM-dependent 2'-O-MTase domain. S-adenosyl-L-methionine contacts are provided by Gly298 and Asp379. The active-site Proton acceptor is Lys419.

The enzyme catalyses a 5'-end (N(7)-methyl 5'-triphosphoguanosine)-ribonucleoside in mRNA + S-adenosyl-L-methionine = a 5'-end (N(7)-methyl 5'-triphosphoguanosine)-(2'-O-methyl-ribonucleoside) in mRNA + S-adenosyl-L-homocysteine + H(+). S-adenosyl-L-methionine-dependent methyltransferase that mediates mRNA cap1 2'-O-ribose methylation to the 5'-cap structure of mRNAs. Methylates the ribose of the first nucleotide of a m(7)GpppG-capped mRNA to produce m(7)GpppNmp (cap1). Cap1 modification is linked to higher levels of translation. This chain is Cap-specific mRNA (nucleoside-2'-O-)-methyltransferase 1, found in Caenorhabditis elegans.